Reading from the N-terminus, the 249-residue chain is 2-dehydro-3-deoxy-L-rhamnonate dehydrogenase (NAD(+)) (249 aa).

The Proton acceptor role is filled by Tyr-156.

This sequence belongs to the short-chain dehydrogenases/reductases (SDR) family. In terms of assembly, homotetramer.

It carries out the reaction 2-dehydro-3-deoxy-L-rhamnonate + NAD(+) = 2,4-didehydro-3-deoxy-L-rhamnonate + NADH + H(+). The protein operates within carbohydrate degradation; L-rhamnose degradation. Functionally, catalyzes the NAD(+)-dependent dehydrogenation of 2-dehydro-3-deoxy-L-rhamnonate to form 2,4-didehydro-3-deoxy-L-rhamnonate. Does not show any detectable activity in the presence of NADP(+). Catalyzes the fourth step in an alternative pathway for rhamnose utilization that does not involve phosphorylated intermediates. This chain is 2-dehydro-3-deoxy-L-rhamnonate dehydrogenase (NAD(+)), found in Sphingomonas sp. (strain SKA58).